The chain runs to 196 residues: Holliday junction branch migration complex subunit RuvA (196 aa).

Residues 1 to 63 form a domain I region; that stretch reads MINKICGKIV…EDEIRLFGFL (63 aa). Residues 64-135 form a domain II region; the sequence is NVSEREVFEK…KLRGKLVKVN (72 aa). Residues 135 to 138 form a flexible linker region; that stretch reads NEAS. The segment at 139-196 is domain III; it reads SGVLKFKELEQSIVNMGFDRKLVAAAIKEIMLIDEFLMLRQVDQEQFLFREILRKLSG.

It belongs to the RuvA family. As to quaternary structure, homotetramer. Forms an RuvA(8)-RuvB(12)-Holliday junction (HJ) complex. HJ DNA is sandwiched between 2 RuvA tetramers; dsDNA enters through RuvA and exits via RuvB. An RuvB hexamer assembles on each DNA strand where it exits the tetramer. Each RuvB hexamer is contacted by two RuvA subunits (via domain III) on 2 adjacent RuvB subunits; this complex drives branch migration. In the full resolvosome a probable DNA-RuvA(4)-RuvB(12)-RuvC(2) complex forms which resolves the HJ.

Its subcellular location is the cytoplasm. Its function is as follows. The RuvA-RuvB-RuvC complex processes Holliday junction (HJ) DNA during genetic recombination and DNA repair, while the RuvA-RuvB complex plays an important role in the rescue of blocked DNA replication forks via replication fork reversal (RFR). RuvA specifically binds to HJ cruciform DNA, conferring on it an open structure. The RuvB hexamer acts as an ATP-dependent pump, pulling dsDNA into and through the RuvAB complex. HJ branch migration allows RuvC to scan DNA until it finds its consensus sequence, where it cleaves and resolves the cruciform DNA. The sequence is that of Holliday junction branch migration complex subunit RuvA from Borrelia turicatae (strain 91E135).